Consider the following 883-residue polypeptide: Valine--tRNA ligase (883 aa).

The short motif at 46-56 is the 'HIGH' region element; that stretch reads PNVTGKLHLGH. Positions 520-524 match the 'KMSKS' region motif; sequence KMSKS. ATP is bound at residue Lys-523. Residues 809-844 adopt a coiled-coil conformation; the sequence is LADLLNVEEELARLEKELAKWQKELDMVGKKLSNER.

The protein belongs to the class-I aminoacyl-tRNA synthetase family. ValS type 1 subfamily. Monomer.

It localises to the cytoplasm. It carries out the reaction tRNA(Val) + L-valine + ATP = L-valyl-tRNA(Val) + AMP + diphosphate. In terms of biological role, catalyzes the attachment of valine to tRNA(Val). As ValRS can inadvertently accommodate and process structurally similar amino acids such as threonine, to avoid such errors, it has a 'posttransfer' editing activity that hydrolyzes mischarged Thr-tRNA(Val) in a tRNA-dependent manner. In Streptococcus thermophilus (strain CNRZ 1066), this protein is Valine--tRNA ligase.